The primary structure comprises 184 residues: Shikimate kinase (184 aa).

17–22 is a binding site for ATP; sequence SVGKTS. A Mg(2+)-binding site is contributed by threonine 21. Residues aspartate 39 and glycine 85 each contribute to the substrate site.

Belongs to the shikimate kinase family. In terms of assembly, monomer. It depends on Mg(2+) as a cofactor.

It localises to the cytoplasm. It catalyses the reaction shikimate + ATP = 3-phosphoshikimate + ADP + H(+). It functions in the pathway metabolic intermediate biosynthesis; chorismate biosynthesis; chorismate from D-erythrose 4-phosphate and phosphoenolpyruvate: step 5/7. In terms of biological role, catalyzes the specific phosphorylation of the 3-hydroxyl group of shikimic acid using ATP as a cosubstrate. This is Shikimate kinase from Chlamydia muridarum (strain MoPn / Nigg).